Reading from the N-terminus, the 540-residue chain is 2-isopropylmalate synthase (540 aa).

The region spanning Val-8–Ser-271 is the Pyruvate carboxyltransferase domain. Mn(2+) contacts are provided by Asp-17, His-208, His-210, and Asn-244. Positions Gln-408 to Leu-540 are regulatory domain.

Belongs to the alpha-IPM synthase/homocitrate synthase family. LeuA type 1 subfamily. In terms of assembly, homodimer. The cofactor is Mn(2+).

The protein resides in the cytoplasm. It catalyses the reaction 3-methyl-2-oxobutanoate + acetyl-CoA + H2O = (2S)-2-isopropylmalate + CoA + H(+). It functions in the pathway amino-acid biosynthesis; L-leucine biosynthesis; L-leucine from 3-methyl-2-oxobutanoate: step 1/4. In terms of biological role, catalyzes the condensation of the acetyl group of acetyl-CoA with 3-methyl-2-oxobutanoate (2-ketoisovalerate) to form 3-carboxy-3-hydroxy-4-methylpentanoate (2-isopropylmalate). This chain is 2-isopropylmalate synthase, found in Synechococcus sp. (strain CC9605).